Reading from the N-terminus, the 404-residue chain is G2/mitotic-specific cyclin-B1 (404 aa).

This sequence belongs to the cyclin family. Cyclin AB subfamily. As to quaternary structure, interacts with the CDK1 protein kinase to form a serine/threonine kinase holoenzyme complex also known as maturation promoting factor (MPF). The cyclin subunit imparts substrate specificity to the complex.

Functionally, essential for the control of the cell cycle at the G2/M (mitosis) transition. This is G2/mitotic-specific cyclin-B1 (ccnb1) from Oryzias latipes (Japanese rice fish).